A 99-amino-acid chain; its full sequence is Small ribosomal subunit protein eS24 (99 aa).

It belongs to the eukaryotic ribosomal protein eS24 family. May be present in 2 copies per 70S ribosome. Part of the 30S ribosomal subunit, where it binds 16S rRNA at its canonical site at the bse of the body, as well as a possible second 50S binding site near 23S rRNA helix 45.

The sequence is that of Small ribosomal subunit protein eS24 from Pyrococcus furiosus (strain ATCC 43587 / DSM 3638 / JCM 8422 / Vc1).